Reading from the N-terminus, the 331-residue chain is Pectinesterase (331 aa).

The signal sequence occupies residues 1-17 (MVKSVLASALFAVSALA). Q139 contacts substrate. The Proton donor role is filled by D162. D183 functions as the Nucleophile in the catalytic mechanism. Positions 248 and 250 each coordinate substrate.

This sequence belongs to the pectinesterase family.

It is found in the secreted. It catalyses the reaction [(1-&gt;4)-alpha-D-galacturonosyl methyl ester](n) + n H2O = [(1-&gt;4)-alpha-D-galacturonosyl](n) + n methanol + n H(+). It participates in glycan metabolism; pectin degradation; 2-dehydro-3-deoxy-D-gluconate from pectin: step 1/5. Its function is as follows. Involved in maceration and soft-rotting of plant tissue. The protein is Pectinesterase (pme1) of Aspergillus aculeatus.